Here is a 460-residue protein sequence, read N- to C-terminus: tRNA modification GTPase MnmE (460 aa).

(6S)-5-formyl-5,6,7,8-tetrahydrofolate-binding residues include Arg24, Glu81, and Lys121. Positions 218–385 constitute a TrmE-type G domain; the sequence is GMVVAIAGPP…LIAAIEDFAA (168 aa). GTP contacts are provided by residues 228-233, 247-253, and 272-275; these read NVGKST, SPHAGTT, and DTAG. Residues Ser232 and Thr253 each coordinate Mg(2+). Lys460 lines the (6S)-5-formyl-5,6,7,8-tetrahydrofolate pocket.

This sequence belongs to the TRAFAC class TrmE-Era-EngA-EngB-Septin-like GTPase superfamily. TrmE GTPase family. In terms of assembly, homodimer. Heterotetramer of two MnmE and two MnmG subunits. It depends on K(+) as a cofactor.

It localises to the cytoplasm. Exhibits a very high intrinsic GTPase hydrolysis rate. Involved in the addition of a carboxymethylaminomethyl (cmnm) group at the wobble position (U34) of certain tRNAs, forming tRNA-cmnm(5)s(2)U34. The chain is tRNA modification GTPase MnmE from Rhodopseudomonas palustris (strain BisB5).